The sequence spans 97 residues: Protein E7 (97 aa).

The segment at 1-40 is E7 terminal domain; sequence MRGHKPTLKEYVLDLYPEPTDLYCYEQLSDSSDEDEGLDR. The LXCXE motif; interaction with host RB1 and TMEM173/STING signature appears at 22–26; sequence LYCYE. A zinc finger lies at 58–94; that stretch reads CHTCNTTVRLCVNSTASDLRTIQQLLMGTVNIVCPTC. Residues 76–84 carry the Nuclear export signal motif; sequence LRTIQQLLM.

The protein belongs to the papillomaviridae E7 protein family. In terms of assembly, homodimer. Homooligomer. Interacts with host RB1; this interaction induces dissociation of RB1-E2F1 complex thereby disrupting RB1 activity. Interacts with host EP300; this interaction represses EP300 transcriptional activity. Interacts with protein E2; this interaction inhibits E7 oncogenic activity. Interacts with host TMEM173/STING; this interaction impairs the ability of TMEM173/STING to sense cytosolic DNA and promote the production of type I interferon (IFN-alpha and IFN-beta). Highly phosphorylated.

It is found in the host cytoplasm. It localises to the host nucleus. Plays a role in viral genome replication by driving entry of quiescent cells into the cell cycle. Stimulation of progression from G1 to S phase allows the virus to efficiently use the cellular DNA replicating machinery to achieve viral genome replication. E7 protein has both transforming and trans-activating activities. Induces the disassembly of the E2F1 transcription factor from RB1, with subsequent transcriptional activation of E2F1-regulated S-phase genes. Interferes with host histone deacetylation mediated by HDAC1 and HDAC2, leading to transcription activation. Also plays a role in the inhibition of both antiviral and antiproliferative functions of host interferon alpha. Interaction with host TMEM173/STING impairs the ability of TMEM173/STING to sense cytosolic DNA and promote the production of type I interferon (IFN-alpha and IFN-beta). This chain is Protein E7, found in Human papillomavirus 33.